Reading from the N-terminus, the 389-residue chain is tRNA (cytosine(72)-C(5))-methyltransferase (389 aa).

A PUA domain is found at 92-167 (LPVVVANKYA…LAVEVTLPKF (76 aa)). Residues 209-215 (AAAPGGK), Asp233, Arg238, Asp260, Asp277, and Tyr304 contribute to the S-adenosyl-L-methionine site. Residue Cys327 is the Nucleophile of the active site.

Belongs to the class I-like SAM-binding methyltransferase superfamily. RsmB/NOP family.

The enzyme catalyses cytidine(72) in tRNA + S-adenosyl-L-methionine = 5-methylcytidine(72) in tRNA + S-adenosyl-L-homocysteine + H(+). It catalyses the reaction cytidine(72) in tRNA(Thr) + S-adenosyl-L-methionine = 5-methylcytidine(72) in tRNA(Thr) + S-adenosyl-L-homocysteine + H(+). The catalysed reaction is cytidine(72) in tRNA(Cys) + S-adenosyl-L-methionine = 5-methylcytidine(72) in tRNA(Cys) + S-adenosyl-L-homocysteine + H(+). Functionally, S-adenosyl-L-methionine-dependent methyltransferase that specifically methylates the C5 position of cytosine 72 in several tRNAs. This modification appears to slightly promote the thermal stability of P.horikoshii tRNAs, but does not affect their amino acid accepting activity. Four elements in the acceptor stems of tRNAs are essential for substrate recognition by this enzyme: the target site C72, the 3'-CCA terminus, U73 or G73, and the second base pair C2:G71. The chain is tRNA (cytosine(72)-C(5))-methyltransferase from Pyrococcus horikoshii (strain ATCC 700860 / DSM 12428 / JCM 9974 / NBRC 100139 / OT-3).